A 753-amino-acid chain; its full sequence is Cytoplasmic polyadenylation element-binding protein 3 (753 aa).

A disordered region spans residues 111 to 286; the sequence is VGESTPSSAG…NGSWHGELPP (176 aa). 2 stretches are compositionally biased toward basic and acidic residues: residues 131–142 and 175–188; these read KPTEKISVDEPP and FGKE…EVVK. Residues 227-239 are compositionally biased toward low complexity; the sequence is SPAKISSNSSSSS. Positions 265–279 are enriched in polar residues; it reads SRQGLSNRDNLSNGS. The region spanning 298–320 is the RRM domain; the sequence is IFVGGVPWDITEAALKDSFGEFG. The tract at residues 567 to 589 is disordered; the sequence is KAYAGPHRRPHLTSNSLSKSHGC. The segment covering 578–589 has biased composition (polar residues); it reads LTSNSLSKSHGC.

Functionally, cytoplasmic polyadenylation element binding protein that binds to and regulates the translation of specific mRNAs. In Caenorhabditis briggsae, this protein is Cytoplasmic polyadenylation element-binding protein 3 (cpb-3).